The primary structure comprises 727 residues: NADH-ubiquinone oxidoreductase 75 kDa subunit, mitochondrial (727 aa).

Residues 1-23 (MLRIPIKRALIGLSNSPKGYVRT) constitute a mitochondrion transit peptide. Residues 30–108 (NLIEVFVDGQ…GWNILTNSEK (79 aa)) enclose the 2Fe-2S ferredoxin-type domain. Residues Cys-64, Cys-75, and Cys-78 each contribute to the [2Fe-2S] cluster site. Position 84 is an N6-acetyllysine (Lys-84). Position 92 (Cys-92) interacts with [2Fe-2S] cluster. Residues 108–147 (KSKKAREGVMEFLLANHPLDCPICDQGGECDLQDQSMMFG) form the 4Fe-4S His(Cys)3-ligated-type domain. Positions 124, 128, 131, 137, 176, 179, 182, and 226 each coordinate [4Fe-4S] cluster. Residues 245-301 (TRKTESIDVMDAVGSNIVVSTRTGEVMRILPRMHEDINEEWISDKTRFAYDGLKRQR) form the 4Fe-4S Mo/W bis-MGD-type domain. Ser-461 is subject to Phosphoserine. N6-acetyllysine occurs at positions 467, 499, and 709.

It belongs to the complex I 75 kDa subunit family. As to quaternary structure, core subunit of respiratory chain NADH dehydrogenase (Complex I) which is composed of 45 different subunits. This is the largest subunit of complex I and it is a component of the iron-sulfur (IP) fragment of the enzyme. Complex I associates with ubiquinol-cytochrome reductase complex (Complex III) to form supercomplexes. In astrocytes, less complex I is assembled into supercomplexes as compared to neurons. Interacts with MDM2. Interacts with AKAP1. [2Fe-2S] cluster is required as a cofactor. It depends on [4Fe-4S] cluster as a cofactor. Acetylation of Lys-84 is observed in liver mitochondria from fasted mice but not from fed mice. In terms of tissue distribution, brain. More abundant in neurons than in astrocytes (at protein level).

It localises to the mitochondrion inner membrane. The catalysed reaction is a ubiquinone + NADH + 5 H(+)(in) = a ubiquinol + NAD(+) + 4 H(+)(out). Its function is as follows. Core subunit of the mitochondrial membrane respiratory chain NADH dehydrogenase (Complex I) which catalyzes electron transfer from NADH through the respiratory chain, using ubiquinone as an electron acceptor. Essential for catalysing the entry and efficient transfer of electrons within complex I. Plays a key role in the assembly and stability of complex I and participates in the association of complex I with ubiquinol-cytochrome reductase complex (Complex III) to form supercomplexes. The protein is NADH-ubiquinone oxidoreductase 75 kDa subunit, mitochondrial (Ndufs1) of Mus musculus (Mouse).